Here is a 99-residue protein sequence, read N- to C-terminus: Cytochrome c oxidase subunit 4 isoform 1, mitochondrial (99 aa).

The Mitochondrial matrix portion of the chain corresponds to 1–73; it reads SVVKSEDFTL…SFAEMNRRSN (73 aa). Residue K4 is modified to N6-acetyllysine; alternate. K4 is modified (N6-succinyllysine; alternate). N6-acetyllysine is present on K28. Residues S31 and S33 each carry the phosphoserine modification. K35 bears the N6-acetyllysine; alternate mark. K35 bears the N6-succinyllysine; alternate mark. Position 42 is an N6-acetyllysine (K42). A helical membrane pass occupies residues 74–99; that stretch reads EWKTVVGTAMFFIGITALVIMWEKLY.

The protein belongs to the cytochrome c oxidase IV family. Component of the cytochrome c oxidase (complex IV, CIV), a multisubunit enzyme composed of 14 subunits. The complex is composed of a catalytic core of 3 subunits MT-CO1, MT-CO2 and MT-CO3, encoded in the mitochondrial DNA, and 11 supernumerary subunits COX4I, COX5A, COX5B, COX6A, COX6B, COX6C, COX7A, COX7B, COX7C, COX8 and NDUFA4, which are encoded in the nuclear genome. The complex exists as a monomer or a dimer and forms supercomplexes (SCs) in the inner mitochondrial membrane with NADH-ubiquinone oxidoreductase (complex I, CI) and ubiquinol-cytochrome c oxidoreductase (cytochrome b-c1 complex, complex III, CIII), resulting in different assemblies (supercomplex SCI(1)III(2)IV(1) and megacomplex MCI(2)III(2)IV(2)). Interacts with PHB2; the interaction decreases in absence of SPHK2. Interacts with AFG1L. Interacts with ABCB7; this interaction allows the regulation of cellular iron homeostasis and cellular reactive oxygen species (ROS) levels in cardiomyocytes. Interacts with FLVCR2; this interaction occurs in the absence of heme and is disrupted upon heme binding. Interacts with IRGC.

Its subcellular location is the mitochondrion inner membrane. It functions in the pathway energy metabolism; oxidative phosphorylation. Its function is as follows. Component of the cytochrome c oxidase, the last enzyme in the mitochondrial electron transport chain which drives oxidative phosphorylation. The respiratory chain contains 3 multisubunit complexes succinate dehydrogenase (complex II, CII), ubiquinol-cytochrome c oxidoreductase (cytochrome b-c1 complex, complex III, CIII) and cytochrome c oxidase (complex IV, CIV), that cooperate to transfer electrons derived from NADH and succinate to molecular oxygen, creating an electrochemical gradient over the inner membrane that drives transmembrane transport and the ATP synthase. Cytochrome c oxidase is the component of the respiratory chain that catalyzes the reduction of oxygen to water. Electrons originating from reduced cytochrome c in the intermembrane space (IMS) are transferred via the dinuclear copper A center (CU(A)) of subunit 2 and heme A of subunit 1 to the active site in subunit 1, a binuclear center (BNC) formed by heme A3 and copper B (CU(B)). The BNC reduces molecular oxygen to 2 water molecules using 4 electrons from cytochrome c in the IMS and 4 protons from the mitochondrial matrix. In Mandrillus sphinx (Mandrill), this protein is Cytochrome c oxidase subunit 4 isoform 1, mitochondrial (COX4I1).